An 883-amino-acid chain; its full sequence is Alanine--tRNA ligase (883 aa).

Histidine 564, histidine 568, cysteine 666, and histidine 670 together coordinate Zn(2+).

This sequence belongs to the class-II aminoacyl-tRNA synthetase family. Zn(2+) serves as cofactor.

The protein resides in the cytoplasm. It carries out the reaction tRNA(Ala) + L-alanine + ATP = L-alanyl-tRNA(Ala) + AMP + diphosphate. Catalyzes the attachment of alanine to tRNA(Ala) in a two-step reaction: alanine is first activated by ATP to form Ala-AMP and then transferred to the acceptor end of tRNA(Ala). Also edits incorrectly charged Ser-tRNA(Ala) and Gly-tRNA(Ala) via its editing domain. The protein is Alanine--tRNA ligase of Synechococcus sp. (strain JA-3-3Ab) (Cyanobacteria bacterium Yellowstone A-Prime).